Here is a 320-residue protein sequence, read N- to C-terminus: MLGKEEEQQYGQNGKGMENELPFMKRPWFKKAYENAIEFHEKDELLDARDRLELSKAYRSIAKAEMWGGWLGFSAVFLTPFAYRYYKTKAIKGVKVPRNFVLGVMALFFATNFAGRSMYTRQLNERDPTGVLKDNYSNKYGDNDFGAFQHDQTKEIPRNQRQYNMMRLLDSGSPSRWSMYFYITYQNPERRLPDPKVKLQQMKKGGVFNGSPFMNQRDPIGLYRNKGRKSPDPIEGEQNDSPVLSSWEKIRNGDNSSSSSWENIRNTSRDQSQESDASVDHESDIFISGFSDDGNATDNSSSDDKYQRLLQSGRYGGNRS.

2 consecutive transmembrane segments (helical) span residues 66-85 (MWGGWLGFSAVFLTPFAYRY) and 100-119 (FVLGVMALFFATNFAGRSMY). Positions 205 to 320 (GGVFNGSPFM…QSGRYGGNRS (116 aa)) are disordered. S230 is subject to Phosphoserine. Residues 253–266 (GDNSSSSSWENIRN) show a composition bias toward polar residues. Basic and acidic residues predominate over residues 267–284 (TSRDQSQESDASVDHESD).

It belongs to the PUP1 family.

The protein resides in the mitochondrion membrane. This is PUP1 protein homolog from Saccharomyces cerevisiae (strain ATCC 204508 / S288c) (Baker's yeast).